We begin with the raw amino-acid sequence, 409 residues long: Diels-Alderase ucsH (409 aa).

Residues 386-406 (IYFFICMLLAVVTFGYINILE) traverse the membrane as a helical segment.

The protein belongs to the Diels-Alderase family.

It localises to the membrane. Its pathway is mycotoxin biosynthesis. Its function is as follows. Diels-Alderase; part of the gene cluster that mediates the biosynthesis of UCS1025A, a member of the pyrrolizidinone family that acts as a strong telomerase inhibitor and displays potent antibacterial and antitumor properties. These compounds share a hemiaminal-containing pyrrolizidinone core fused with a gamma-lactone, giving a furopyrrolizidine that is connected to a decalin fragment. The polyketide synthase module (PKS) of the PKS-NRPS ucsA is responsible for the synthesis of the polyketide backbone via the condensation of an acetyl-CoA starter unit with 6 malonyl-CoA units. The downstream nonribosomal peptide synthetase (NRPS) module then amidates the carboxyl end of the polyketide with a 2S,3S-methylproline derived from L-isoleucine by the 2-oxoglutarate-dependent dioxygenase ucsF which converts L-isoleucine to (4S,5S)-4-methylpyrroline-5-carboxylate that is further converted to 2S,3S-methylproline by the pyrroline-5-carboxylate reductase ucsG. Reductive release of the completed aminoacyl polyketide from the assembly line can form the 3-pyrrolin-2-one structure via an intramolecular Knoevenagel reaction. Because ucsA lacks a designated enoylreductase (ER) domain, the required activity is provided the enoyl reductase ucsL. This keto acyclic precursor is the substrate of the Diels-Alderase ucsH, that catalyzes the Diels-Alder cycloaddition. Oxidation of the 3S-methyl group to a carboxylate by the cytochrome P450 monooxygenase ucsK allows an oxa-Michael cyclization that might involve the reductase/dehydrogenase ucsI and which furnishes the furopyrrolizidine. The oxidase ucsJ likely plays a critical role in stereoselective reduction of the C5-C6 double bond to afford the required R-configured carboxylate group. Further enolization and oxidation at C5 by an unidentified enzyme affords the last intermediate that can undergo oxa-Michael cyclization to yield UCS1025A. The chain is Diels-Alderase ucsH from Acremonium sp.